A 77-amino-acid chain; its full sequence is Protein AC145 (77 aa).

Its subcellular location is the host nucleus. The protein localises to the virion. Functionally, plays a role in primary oral infection of the host. This Autographa californica nuclear polyhedrosis virus (AcMNPV) protein is Protein AC145.